A 158-amino-acid chain; its full sequence is ATP synthase subunit b', chloroplastic (158 aa).

The chain crosses the membrane as a helical span at residues 25-45; the sequence is ATLPLMALQFIILTTILNFIF.

Belongs to the ATPase B chain family. F-type ATPases have 2 components, F(1) - the catalytic core - and F(0) - the membrane proton channel. F(1) has five subunits: alpha(3), beta(3), gamma(1), delta(1), epsilon(1). F(0) has four main subunits: a(1), b(1), b'(1) and c(10-14). The alpha and beta chains form an alternating ring which encloses part of the gamma chain. F(1) is attached to F(0) by a central stalk formed by the gamma and epsilon chains, while a peripheral stalk is formed by the delta, b and b' chains.

Its subcellular location is the plastid. The protein localises to the chloroplast thylakoid membrane. F(1)F(0) ATP synthase produces ATP from ADP in the presence of a proton or sodium gradient. F-type ATPases consist of two structural domains, F(1) containing the extramembraneous catalytic core and F(0) containing the membrane proton channel, linked together by a central stalk and a peripheral stalk. During catalysis, ATP synthesis in the catalytic domain of F(1) is coupled via a rotary mechanism of the central stalk subunits to proton translocation. Functionally, component of the F(0) channel, it forms part of the peripheral stalk, linking F(1) to F(0). The b'-subunit is a diverged and duplicated form of b found in plants and photosynthetic bacteria. This Gracilaria tenuistipitata var. liui (Red alga) protein is ATP synthase subunit b', chloroplastic.